Reading from the N-terminus, the 181-residue chain is UPF0397 protein SUB0313 (181 aa).

5 helical membrane passes run 11-31, 45-65, 69-89, 114-134, and 147-167; these read AIGIGAALFVIIGLFVPITIF, LFSVLFGPVAGFFIGFIGHML, FAGYGVWWSWVLPSGLVGLGI, VQALVNLISWAIVAPLGDILI, and LFAAFANTFTIGIGGTLLLIA.

This sequence belongs to the UPF0397 family.

It localises to the cell membrane. The chain is UPF0397 protein SUB0313 from Streptococcus uberis (strain ATCC BAA-854 / 0140J).